We begin with the raw amino-acid sequence, 339 residues long: Putative adenosine/adenine deaminase (339 aa).

3 residues coordinate Zn(2+): His16, His18, and His200. Substrate is bound at residue His18. Glu203 serves as the catalytic Proton donor. Asp281 lines the Zn(2+) pocket. Substrate is bound at residue Asp282.

This sequence belongs to the metallo-dependent hydrolases superfamily. Adenosine and AMP deaminases family. Zn(2+) is required as a cofactor.

Its function is as follows. Putative nucleoside deaminase. May catalyze the hydrolytic deamination of adenosine or some similar substrate and play a role in purine metabolism. The chain is Putative adenosine/adenine deaminase from Streptomyces virginiae (Streptomyces cinnamonensis).